The primary structure comprises 120 residues: NAD(P)H-quinone oxidoreductase subunit 3, chloroplastic (120 aa).

3 helical membrane passes run 9–29 (IFWA…LISG), 64–84 (MFAL…PWAM), and 88–108 (VLGL…IVGS).

Belongs to the complex I subunit 3 family. NDH is composed of at least 16 different subunits, 5 of which are encoded in the nucleus.

The protein resides in the plastid. Its subcellular location is the chloroplast thylakoid membrane. It catalyses the reaction a plastoquinone + NADH + (n+1) H(+)(in) = a plastoquinol + NAD(+) + n H(+)(out). It carries out the reaction a plastoquinone + NADPH + (n+1) H(+)(in) = a plastoquinol + NADP(+) + n H(+)(out). In terms of biological role, NDH shuttles electrons from NAD(P)H:plastoquinone, via FMN and iron-sulfur (Fe-S) centers, to quinones in the photosynthetic chain and possibly in a chloroplast respiratory chain. The immediate electron acceptor for the enzyme in this species is believed to be plastoquinone. Couples the redox reaction to proton translocation, and thus conserves the redox energy in a proton gradient. The protein is NAD(P)H-quinone oxidoreductase subunit 3, chloroplastic of Manihot esculenta (Cassava).